The chain runs to 438 residues: Coenzyme A disulfide reductase (438 aa).

8–33 (GAVAGGATCASQIRRLDKESDIIIFE) is an FAD binding site. Positions 15, 19, 22, 39, and 42 each coordinate substrate. C43 functions as the Nucleophile in the catalytic mechanism. The active-site Redox-active is the C43. Residue K71 coordinates substrate. 151 to 166 (VLVVGAGYVSLEVLEN) contributes to the NADP(+) binding site. 267 to 277 (TNVPNIYAIGD) is an FAD binding site. H299 provides a ligand contact to substrate. FAD is bound at residue Y419. K427 provides a ligand contact to substrate.

It belongs to the class-III pyridine nucleotide-disulfide oxidoreductase family. Homodimer. FAD serves as cofactor.

The enzyme catalyses NADP(+) + 2 CoA = CoA-disulfide + NADPH + H(+). In terms of biological role, catalyzes specifically the NADPH-dependent reduction of coenzyme A disulfide. The protein is Coenzyme A disulfide reductase of Staphylococcus aureus (strain bovine RF122 / ET3-1).